The sequence spans 1537 residues: Dual oxidase (1537 aa).

The segment at 1 to 29 (MSVPSAPHQRAESKNRVPRPGQKNRKLPK) is disordered. Over 1-626 (MSVPSAPHQR…EGYDYFSGSE (626 aa)) the chain is Extracellular. A peroxidase-like; mediates peroxidase activity region spans residues 63–628 (MYSQTEKQRY…YDYFSGSELM (566 aa)). N-linked (GlcNAc...) asparagine glycosylation is found at N133, N233, N577, and N606. Residues 627-647 (LMFIYVCVFLGFVPILCAGAG) traverse the membrane as a helical segment. At 648-1029 (YCVVKLQNSK…ITFLEENRQN (382 aa)) the chain is on the cytoplasmic side. Residue S826 is modified to Phosphoserine. 3 consecutive EF-hand domains span residues 855–890 (PNDM…FSRG), 891–926 (KTDD…LVEI), and 936–971 (QVTE…YKGD). Ca(2+) is bound by residues D868, D870, D872, R874, E879, D904, D906, N908, and E915. Residues 1030 to 1050 (IFYLFLFYVVTIVLFVERFIH) form a helical membrane-spanning segment. Topologically, residues 1051-1065 (YSFMAEHTDLRHIMG) are extracellular. A helical transmembrane segment spans residues 1066–1086 (VGIAITRGSAASLSFCYSLLL). The Ferric oxidoreductase domain maps to 1078–1218 (LSFCYSLLLL…TLYIGLYLLS (141 aa)). The Cytoplasmic portion of the chain corresponds to 1087–1116 (LTMSRNLITKLKEFPIQQYIPLDSHIQFHK). A Phosphotyrosine modification is found at Y1105. Residues 1117–1137 (IAACTALFFSVLHTVGHIVNF) traverse the membrane as a helical segment. Residues 1138-1171 (YHVSTQSHENLRCLTREVHFASDYKPDITFWLFQ) lie on the Extracellular side of the membrane. A helical membrane pass occupies residues 1172–1192 (TVTGTTGVMLFIIMCIIFVFA). The Cytoplasmic portion of the chain corresponds to 1193 to 1202 (HPTIRKKAYN). A helical membrane pass occupies residues 1203–1223 (FFWNMHTLYIGLYLLSLIHGL). Over 1224–1230 (ARLTGPP) the chain is Extracellular. The helical transmembrane segment at 1231-1251 (RFWMFFLGPGIVYTLDKIVSL) threads the bilayer. The Cytoplasmic portion of the chain corresponds to 1252 to 1537 (RTKYMALDVI…YFIHHFENFG (286 aa)). The FAD-binding FR-type domain occupies 1253-1358 (TKYMALDVID…EGPFGGGNQD (106 aa)).

This sequence in the N-terminal section; belongs to the peroxidase family.

The protein localises to the membrane. The catalysed reaction is NADH + O2 + H(+) = H2O2 + NAD(+). It catalyses the reaction NADPH + O2 + H(+) = H2O2 + NADP(+). Its activity is regulated as follows. Peroxidase activity is inhibited by aminotriazole and azide. In terms of biological role, plays a role in innate immunity limiting microbial proliferation in the gut. Acts downstream of a hh-signaling pathway to induce the production of reactive oxygen species (ROS) in response to intestinal bacterial infection. May generate antimicrobial oxidative burst through its peroxidase-like domain. The chain is Dual oxidase (Duox) from Drosophila melanogaster (Fruit fly).